Reading from the N-terminus, the 172-residue chain is Stellate orphon protein at 12D (172 aa).

This sequence belongs to the casein kinase 2 subunit beta family. As to quaternary structure, interacts in vitro with the casein kinase 2 alpha subunit (CkII-alpha). The relevance of such interaction is however unclear in vivo. Probably not expressed in wild-type flies. In males lacking the Y chromosome, it is testis-specific and constitutes the main component of star-shaped crystals.

Functionally, unknown. In males lacking the Y chromosome, its strong overexpression leads to the appearance of proteinaceous star-shaped crystals in the primary spermatocytes causing meiotic drive, possibly by interfering with normal casein kinase 2 activity. The protein is Stellate orphon protein at 12D (Ste12DOR) of Drosophila melanogaster (Fruit fly).